A 521-amino-acid chain; its full sequence is MLAKGLPPRSVLVKGCQTFLSAPKERLGHLRVPTSEGAGISTRSPRPFNEIPSPGDNGWLNLYHFWRETGTHKVHLHHVQNFQKYDPIYREKLGNVESVYVIDPEDVALLFKSEGPNPERFLIPPWVAYHQYYQRPIGVLLKKSAAWKKDRVALNQEVMAPETTKNFLPLLDAVSRDFVSVLHRRIKKAGSGNFSGDISDDLFRFAFESITNVIFGERQGMLEEVVNPEGQRFIDAIYQMFHTSVHMLNLPPDLFRLFRTKTWKDHVAPRDVIFSKADMYTENFHWELRQKGNVHHDYRGILYRLLGDSKMSFEDIKANVTEMLAGGVDTTSMTLQWHLYEMARNLKVQDMLRAEVLAARRQAQGDMATILQLVPLLKASIKETLRLHPISVTLQRYLVNDLVLRGYMIPAKTLVQVAIYALGREPTFFFDPENFDPTRWLSKDKNITYFRNLGFGWGVRQCLGRRIAELEMTIFLINMLENFRVEIQHLSDVGTTFNLILMPEKPISFTFWPFNQEATQE.

The transit peptide at 1–39 directs the protein to the mitochondrion; that stretch reads MLAKGLPPRSVLVKGCQTFLSAPKERLGHLRVPTSEGAG. Position 462 (cysteine 462) interacts with heme.

Belongs to the cytochrome P450 family. Interacts with FDX1/adrenodoxin. Requires heme as cofactor.

The protein localises to the mitochondrion inner membrane. It catalyses the reaction 6 reduced [adrenodoxin] + cholesterol + 3 O2 + 6 H(+) = 4-methylpentanal + pregnenolone + 6 oxidized [adrenodoxin] + 4 H2O. The catalysed reaction is 2 reduced [adrenodoxin] + cholesterol + O2 + 2 H(+) = (22R)-hydroxycholesterol + 2 oxidized [adrenodoxin] + H2O. The enzyme catalyses (22R)-hydroxycholesterol + 2 reduced [adrenodoxin] + O2 + 2 H(+) = (20R,22R)-20,22-dihydroxycholesterol + 2 oxidized [adrenodoxin] + H2O. It carries out the reaction (20R,22R)-20,22-dihydroxycholesterol + 2 reduced [adrenodoxin] + O2 + 2 H(+) = 4-methylpentanal + pregnenolone + 2 oxidized [adrenodoxin] + 2 H2O. It participates in lipid metabolism; C21-steroid hormone metabolism. Its pathway is steroid metabolism; cholesterol metabolism. Functionally, a cytochrome P450 monooxygenase that catalyzes the side-chain hydroxylation and cleavage of cholesterol to pregnenolone, the precursor of most steroid hormones. Catalyzes three sequential oxidation reactions of cholesterol, namely the hydroxylation at C22 followed with the hydroxylation at C20 to yield 20R,22R-hydroxycholesterol that is further cleaved between C20 and C22 to yield the C21-steroid pregnenolone and 4-methylpentanal. Mechanistically, uses molecular oxygen inserting one oxygen atom into a substrate and reducing the second into a water molecule. Two electrons are provided by NADPH via a two-protein mitochondrial transfer system comprising flavoprotein FDXR (adrenodoxin/ferredoxin reductase) and nonheme iron-sulfur protein FDX1 or FDX2 (adrenodoxin/ferredoxin). The protein is Cholesterol side-chain cleavage enzyme, mitochondrial (CYP11A1) of Macaca fascicularis (Crab-eating macaque).